We begin with the raw amino-acid sequence, 227 residues long: Orotate phosphoribosyltransferase (227 aa).

Residue Lys34 participates in 5-phospho-alpha-D-ribose 1-diphosphate binding. 42 to 43 (FF) contacts orotate. 5-phospho-alpha-D-ribose 1-diphosphate-binding positions include 80 to 81 (YK), Arg106, Lys107, Lys110, His112, and 131 to 139 (DDVISAGTS). Orotate is bound by residues Ser135 and Arg163.

The protein belongs to the purine/pyrimidine phosphoribosyltransferase family. PyrE subfamily. As to quaternary structure, homodimer. Requires Mg(2+) as cofactor.

It carries out the reaction orotidine 5'-phosphate + diphosphate = orotate + 5-phospho-alpha-D-ribose 1-diphosphate. Its pathway is pyrimidine metabolism; UMP biosynthesis via de novo pathway; UMP from orotate: step 1/2. Functionally, catalyzes the transfer of a ribosyl phosphate group from 5-phosphoribose 1-diphosphate to orotate, leading to the formation of orotidine monophosphate (OMP). The chain is Orotate phosphoribosyltransferase from Cupriavidus necator (strain ATCC 17699 / DSM 428 / KCTC 22496 / NCIMB 10442 / H16 / Stanier 337) (Ralstonia eutropha).